A 202-amino-acid chain; its full sequence is Precorrin-2 dehydrogenase (202 aa).

Residues 20-21 and 41-42 each bind NAD(+); these read TI and PT.

This sequence belongs to the precorrin-2 dehydrogenase / sirohydrochlorin ferrochelatase family. In terms of assembly, homodimer.

It catalyses the reaction precorrin-2 + NAD(+) = sirohydrochlorin + NADH + 2 H(+). The protein operates within cofactor biosynthesis; adenosylcobalamin biosynthesis; sirohydrochlorin from precorrin-2: step 1/1. Its pathway is porphyrin-containing compound metabolism; siroheme biosynthesis; sirohydrochlorin from precorrin-2: step 1/1. In terms of biological role, catalyzes the dehydrogenation of precorrin-2 to form sirohydrochlorin which is used as a precursor in both siroheme biosynthesis and in the anaerobic branch of adenosylcobalamin biosynthesis. It is unable to oxidize precorrin-3. The chain is Precorrin-2 dehydrogenase (sirC) from Priestia megaterium (Bacillus megaterium).